A 443-amino-acid polypeptide reads, in one-letter code: Threonine/serine transporter TdcC (443 aa).

11 helical membrane-spanning segments follow: residues 22–42, 44–64, 97–117, 140–160, 163–183, 207–227, 261–281, 319–339, 366–386, 389–409, and 423–443; these read TTWT…FFPI, AGFG…PIAF, GVVI…IYGV, FVAL…KDLM, VMSY…LSLI, ILVT…FSPI, MLMV…LSPA, ASII…LGTL, ISMI…PNIL, IEAM…MYAI, and DNVF…YKLF.

This sequence belongs to the amino acid/polyamine transporter 2 family. SdaC/TdcC subfamily.

The protein resides in the cell inner membrane. It catalyses the reaction L-threonine(in) + H(+)(in) = L-threonine(out) + H(+)(out). The catalysed reaction is L-serine(in) + H(+)(in) = L-serine(out) + H(+)(out). Functionally, involved in the import of threonine and serine into the cell, with the concomitant import of a proton (symport system). The polypeptide is Threonine/serine transporter TdcC (Citrobacter koseri (strain ATCC BAA-895 / CDC 4225-83 / SGSC4696)).